Consider the following 347-residue polypeptide: Selenide, water dikinase (347 aa).

Cysteine 16 is a catalytic residue. ATP-binding positions include lysine 19 and 47–49 (TRD). Aspartate 50 provides a ligand contact to Mg(2+). Residues aspartate 67, aspartate 90, and 138-140 (GHS) contribute to the ATP site. Aspartate 90 lines the Mg(2+) pocket. Aspartate 226 is a Mg(2+) binding site.

This sequence belongs to the selenophosphate synthase 1 family. Class I subfamily. In terms of assembly, homodimer. It depends on Mg(2+) as a cofactor.

The catalysed reaction is hydrogenselenide + ATP + H2O = selenophosphate + AMP + phosphate + 2 H(+). Synthesizes selenophosphate from selenide and ATP. In Photorhabdus laumondii subsp. laumondii (strain DSM 15139 / CIP 105565 / TT01) (Photorhabdus luminescens subsp. laumondii), this protein is Selenide, water dikinase.